The chain runs to 180 residues: Flavodoxin B (180 aa).

One can recognise a Flavodoxin-like domain in the interval 4–173; that stretch reads IGLFFGSNTG…RVAAWLAQIA (170 aa).

The protein belongs to the flavodoxin family. Requires FMN as cofactor.

Functionally, low-potential electron donor to a number of redox enzymes. NifF is the electron donor to nitrogenase. This is Flavodoxin B (nifF) from Azotobacter chroococcum mcd 1.